The primary structure comprises 131 residues: Large ribosomal subunit protein bL17 (131 aa).

It belongs to the bacterial ribosomal protein bL17 family. Part of the 50S ribosomal subunit. Contacts protein L32.

This Paraburkholderia phymatum (strain DSM 17167 / CIP 108236 / LMG 21445 / STM815) (Burkholderia phymatum) protein is Large ribosomal subunit protein bL17.